The primary structure comprises 298 residues: Small ribosomal subunit protein uS3 (298 aa).

The region spanning 39 to 107 (VREYLKAKLK…PVAVNIEEVR (69 aa)) is the KH type-2 domain. The tract at residues 214–298 (PAAVEARTDE…PAAAADGKGE (85 aa)) is disordered. Positions 219 to 245 (ARTDEERRPRGPRRDDRGARPGADRPA) are enriched in basic and acidic residues. The span at 277–298 (KPAVQRVRKVAAPAAAADGKGE) shows a compositional bias: low complexity.

The protein belongs to the universal ribosomal protein uS3 family. In terms of assembly, part of the 30S ribosomal subunit. Forms a tight complex with proteins S10 and S14.

Binds the lower part of the 30S subunit head. Binds mRNA in the 70S ribosome, positioning it for translation. This Albidiferax ferrireducens (strain ATCC BAA-621 / DSM 15236 / T118) (Rhodoferax ferrireducens) protein is Small ribosomal subunit protein uS3.